Consider the following 78-residue polypeptide: Large ribosomal subunit protein bL28 (78 aa).

It belongs to the bacterial ribosomal protein bL28 family.

This chain is Large ribosomal subunit protein bL28, found in Francisella philomiragia subsp. philomiragia (strain ATCC 25017 / CCUG 19701 / FSC 153 / O#319-036).